Here is a 276-residue protein sequence, read N- to C-terminus: MRLQRNSIICALVFLVSFVLGDVNIVSPSSKATFSPSGGTVSVPVEWMDNGAYPSLSKISTFTFSLCTGPNNNIDCVAVLASKITPSELTQDDKVYSYTAEFASTLTGNGQYYIQVFAQVDGQGYTIHYTPRFQLTSMGGVTAYTYSATTEPTPQTSIQTTTTNNAQATTIDSRSFTVPYTKQTGTSRFAPMQMQPNTKVTATTWTRKFATSAVTYYSTFGSLPEQATTITPGWSYTISSGVNYATPASMPSDNGGWYKPSKRLSLSARKINMRKV.

The first 21 residues, 1 to 21 (MRLQRNSIICALVFLVSFVLG), serve as a signal peptide directing secretion.

This sequence belongs to the KRE9/KNH1 family. O-glycosylated.

The protein resides in the secreted. It localises to the cell wall. Its function is as follows. Involved in cell wall beta(1-&gt;6) glucan synthesis. The sequence is that of Cell wall synthesis protein KRE9 from Saccharomyces cerevisiae (strain ATCC 204508 / S288c) (Baker's yeast).